A 1021-amino-acid polypeptide reads, in one-letter code: Replication factor C subunit 1 (1021 aa).

Disordered regions lie at residues 1–259 (MSSD…EGAP) and 339–392 (PAKA…GSAS). Residues 90-110 (KVSDELEDDMKPLPAKEVHKE) show a composition bias toward basic and acidic residues. A compositionally biased stretch (basic residues) spans 123-138 (SKRKTPVKPPPSKKLK). Positions 197–207 (LDDDGEEDKMD) are enriched in acidic residues. A compositionally biased stretch (gly residues) spans 219–236 (RGRGGASGGRGRGGGGRG). Basic and acidic residues-rich tracts occupy residues 241–255 (GERK…KEVP) and 347–357 (HQSDKNSEKQQ). The BRCT domain maps to 257–347 (GAPDCLTGLT…KPAKATVAKH (91 aa)). Positions 374-392 (NQITTGKNISPKSNKGSAS) are enriched in polar residues. Residue 465 to 472 (SGPPGIGK) coordinates ATP. Residues 931–1021 (VGESLPEENG…AGGSGGKRKR (91 aa)) are disordered. Acidic residues predominate over residues 945 to 958 (EGDEEDSSDAENND). Residues 965–977 (TKPKLDLQSDKKK) are compositionally biased toward basic and acidic residues. Residues 999–1010 (AGRSKASGSAGK) are compositionally biased toward low complexity. The segment covering 1011 to 1021 (AAGGSGGKRKR) has biased composition (gly residues).

The protein belongs to the activator 1 large subunit family. In terms of assembly, heterotetramer of subunits RFC2, RFC3, RFC4 and RFC5 that can form a complex with RFC1. As to expression, expressed in roots, leaves, shoot apical meristem (SAM), flag leaves and panicles.

The protein resides in the nucleus. May be involved in DNA replication and thus regulate cell proliferation. In Oryza sativa subsp. japonica (Rice), this protein is Replication factor C subunit 1 (RFC1).